A 248-amino-acid polypeptide reads, in one-letter code: N-acylneuraminate-9-phosphatase (248 aa).

D12 provides a ligand contact to Mg(2+). Phosphate-binding residues include L13, D14, T131, N132, and K164. Position 14 (D14) interacts with Mg(2+). D189 serves as a coordination point for Mg(2+).

Belongs to the HAD-like hydrolase superfamily. NANP family. Mg(2+) serves as cofactor.

The catalysed reaction is N-acetylneuraminate 9-phosphate + H2O = N-acetylneuraminate + phosphate. It carries out the reaction N-glycoloylneuraminate 9-phosphate + H2O = N-glycoloylneuraminate + phosphate. It participates in amino-sugar metabolism; N-acetylneuraminate biosynthesis. Its activity is regulated as follows. Inhibited by calcium. Inhibited by vanadate, sodium orthovanadate and phosphonate. Functionally, catalyzes the dephosphorylation of N-acylneuraminate 9-phosphate (Neu5Ac-9-P) to N-acetylneuraminic acid (Neu5Ac or sialic acid). Can also use N-glycoloylneuraminate 9-phosphate as substrate. This chain is N-acylneuraminate-9-phosphatase, found in Rattus norvegicus (Rat).